A 197-amino-acid polypeptide reads, in one-letter code: MDMQSRIRQLFQASIDTKQQAMDVLAPHIEQASQVMVNALLNEGKMLSCGNGGSAGDAQHFSSELLNRFERERPSLPAIALTTDSSTITSIANDYSYNEVFSKQIRALGQPGDVLLAISTSGNSANIIQAIQAAHDREMIVVALTGRDGGGMASLLLPEDVEIRVPANVTARIQEVHLLAIHCLCDLIDSQLFGSEE.

In terms of domain architecture, SIS spans 36–197 (MVNALLNEGK…IDSQLFGSEE (162 aa)). Residue 51 to 53 (NGG) coordinates substrate. The Zn(2+) site is built by H60 and E64. Residues E64, 93–94 (ND), 119–121 (STS), S124, and Q174 contribute to the substrate site. Positions 174 and 182 each coordinate Zn(2+).

This sequence belongs to the SIS family. GmhA subfamily. In terms of assembly, homotetramer. Zn(2+) is required as a cofactor.

It is found in the cytoplasm. It carries out the reaction 2 D-sedoheptulose 7-phosphate = D-glycero-alpha-D-manno-heptose 7-phosphate + D-glycero-beta-D-manno-heptose 7-phosphate. It functions in the pathway carbohydrate biosynthesis; D-glycero-D-manno-heptose 7-phosphate biosynthesis; D-glycero-alpha-D-manno-heptose 7-phosphate and D-glycero-beta-D-manno-heptose 7-phosphate from sedoheptulose 7-phosphate: step 1/1. Catalyzes the isomerization of sedoheptulose 7-phosphate in D-glycero-D-manno-heptose 7-phosphate. This Pseudomonas fluorescens (strain Pf0-1) protein is Phosphoheptose isomerase.